Reading from the N-terminus, the 248-residue chain is 1-(5-phosphoribosyl)-5-[(5-phosphoribosylamino)methylideneamino] imidazole-4-carboxamide isomerase (248 aa).

The active-site Proton acceptor is D11. The Proton donor role is filled by D132.

Belongs to the HisA/HisF family.

It is found in the cytoplasm. It carries out the reaction 1-(5-phospho-beta-D-ribosyl)-5-[(5-phospho-beta-D-ribosylamino)methylideneamino]imidazole-4-carboxamide = 5-[(5-phospho-1-deoxy-D-ribulos-1-ylimino)methylamino]-1-(5-phospho-beta-D-ribosyl)imidazole-4-carboxamide. It functions in the pathway amino-acid biosynthesis; L-histidine biosynthesis; L-histidine from 5-phospho-alpha-D-ribose 1-diphosphate: step 4/9. This is 1-(5-phosphoribosyl)-5-[(5-phosphoribosylamino)methylideneamino] imidazole-4-carboxamide isomerase from Afipia carboxidovorans (strain ATCC 49405 / DSM 1227 / KCTC 32145 / OM5) (Oligotropha carboxidovorans).